The sequence spans 809 residues: Plasminogen (809 aa).

The signal sequence occupies residues Met-1–Gly-19. Residues Asp-20–Ile-98 enclose the PAN domain. Disulfide bonds link Cys-49–Cys-73, Cys-53–Cys-61, Cys-103–Cys-181, Cys-124–Cys-164, Cys-152–Cys-176, Cys-185–Cys-262, Cys-188–Cys-316, Cys-206–Cys-245, Cys-234–Cys-257, Cys-275–Cys-352, Cys-296–Cys-335, Cys-324–Cys-347, Cys-377–Cys-454, Cys-398–Cys-437, Cys-426–Cys-449, Cys-480–Cys-559, Cys-501–Cys-542, Cys-530–Cys-554, Cys-566–Cys-684, Cys-576–Cys-584, Cys-606–Cys-622, Cys-698–Cys-765, Cys-728–Cys-744, and Cys-755–Cys-783. Kringle domains follow at residues Cys-103–Cys-181 and Cys-185–Cys-262. Residue Thr-268 is glycosylated (O-linked (GalNAc...) threonine). 3 Kringle domains span residues Cys-275 to Cys-352, Cys-377 to Cys-454, and Cys-480 to Cys-559. N-linked (GlcNAc...) asparagine glycosylation occurs at Asn-308. One can recognise a Peptidase S1 domain in the interval Val-580–Arg-807. Position 596 is a phosphoserine (Ser-596). Active-site charge relay system residues include His-621 and Asp-664. The active-site Charge relay system is Ser-759.

The protein belongs to the peptidase S1 family. Plasminogen subfamily. Interacts with CSPG4 and AMOT. Interacts (via the Kringle domains) with HRG; the interaction tethers PLG to the cell surface and enhances its activation. Interacts (via Kringle 4 domain) with ADA; the interaction stimulates PLG activation when in complex with DPP4. Angiostatin: Interacts with ATP5F1A; the interaction inhibits most of the angiogenic effects of angiostatin. N-linked glycan contains N-acetyllactosamine, sialic acid and is core fucosylated. O-linked glycans consist of Gal-GalNAc disaccharide which is modified with up to 2 sialic acid residues (microheterogeneity). Post-translationally, in the presence of the inhibitor, the activation involves only cleavage after Arg-579, yielding two chains held together by two disulfide bonds. In the absence of the inhibitor, the activation involves additionally the removal of the activation peptide.

The protein resides in the secreted. It carries out the reaction Preferential cleavage: Lys-|-Xaa &gt; Arg-|-Xaa, higher selectivity than trypsin. Converts fibrin into soluble products.. Its activity is regulated as follows. Converted into plasmin by plasminogen activators, both plasminogen and its activator being bound to fibrin. Cannot be activated with streptokinase. Its function is as follows. Plasmin dissolves the fibrin of blood clots and acts as a proteolytic factor in a variety of other processes including embryonic development, tissue remodeling, tumor invasion, and inflammation. In ovulation, weakens the walls of the Graafian follicle. It activates the urokinase-type plasminogen activator, collagenases and several complement zymogens, such as C1, C4 and C5. Cleavage of fibronectin and laminin leads to cell detachment and apoptosis. Also cleaves fibrin, thrombospondin and von Willebrand factor. Its role in tissue remodeling and tumor invasion may be modulated by CSPG4. Binds to cells. The chain is Plasminogen (PLG) from Sus scrofa (Pig).